The following is a 233-amino-acid chain: tRNA (guanine-N(7)-)-methyltransferase (233 aa).

A disordered region spans residues 1–22; that stretch reads MIDENHPMRAAGNFFGRRHGKP. S-adenosyl-L-methionine contacts are provided by E64, E89, D116, and D138. Residue D138 is part of the active site. Residues K142, D174, and 212–215 each bind substrate; that span reads TRYE.

This sequence belongs to the class I-like SAM-binding methyltransferase superfamily. TrmB family.

It catalyses the reaction guanosine(46) in tRNA + S-adenosyl-L-methionine = N(7)-methylguanosine(46) in tRNA + S-adenosyl-L-homocysteine. Its pathway is tRNA modification; N(7)-methylguanine-tRNA biosynthesis. Functionally, catalyzes the formation of N(7)-methylguanine at position 46 (m7G46) in tRNA. The sequence is that of tRNA (guanine-N(7)-)-methyltransferase from Brucella abortus (strain 2308).